We begin with the raw amino-acid sequence, 664 residues long: Ent-copalyl diphosphate synthase 5 (664 aa).

Residue Lys101 coordinates substrate. Residues Asp233 and Asp235 each contribute to the Mg(2+) site. The DXDD motif signature appears at 233 to 236; that stretch reads DIDD. Lys320 contacts substrate.

It belongs to the terpene synthase family. Tpsc subfamily. The cofactor is Mg(2+). As to expression, ubiquitous expression in roots, stems, leaves and flowers.

The protein localises to the plastid. Its subcellular location is the chloroplast. It carries out the reaction (2E,6E,10E)-geranylgeranyl diphosphate = ent-copalyl diphosphate. Its pathway is secondary metabolite biosynthesis; terpenoid biosynthesis. In terms of biological role, involved in the biosynthesis of ent-kaurene diterpenoids natural products such as oridonin, miltiradiene, eriocalyxin B and nezukol, known to exhibit antitumor, anti-inflammatory and antibacterial activities. Catalyzes the conversion of (2E,6E,10E)-geranylgeranyl diphosphate (GGPP) to ent-copalyl diphosphate (ent-CPP). The protein is Ent-copalyl diphosphate synthase 5 of Isodon rubescens (Rabdosia rubescens).